The chain runs to 420 residues: MSSKELFELAAKLFPMGVNSPVRYFKDYPFYVKEGKGSTILDVDGNKYIDYCLGYGPLILGHSDPDVTRAVIEQAEKGLLFGEPSENEIKLAEMIKETSKNIEMMRFTNSGTEATMHAIRLARAITGRKLIVKMEGGFHGAHDYSLIKSGSGTLTFGSPSSPGIPDEVAQTVIVGKYNDENNIKEIFQKYGDKIAAVITEPIMGNAGVILPKQGFLEFLRDITQKHGSLLIFDEVITGYRFAFSPFQDIMRIDPDITTMGKIIGGGLPIGLFGGSEEIMKNISPSGNVYEAGTFSGNPMSMAAGYAAMEKLSKQDYSILKKRTQKLVSGIDDILDRKHITHTIKYYGTMFQVFFADHVNNYDDALKARKEVYFKLFKALSKNGVYLPPSQYETNFVSFAHSDSDIDATLAAFEKAVAEMD.

At Lys-261 the chain carries N6-(pyridoxal phosphate)lysine.

It belongs to the class-III pyridoxal-phosphate-dependent aminotransferase family. HemL subfamily. The cofactor is pyridoxal 5'-phosphate.

The protein localises to the cytoplasm. It catalyses the reaction (S)-4-amino-5-oxopentanoate = 5-aminolevulinate. Its pathway is porphyrin-containing compound metabolism; protoporphyrin-IX biosynthesis; 5-aminolevulinate from L-glutamyl-tRNA(Glu): step 2/2. The chain is Glutamate-1-semialdehyde 2,1-aminomutase from Thermoplasma volcanium (strain ATCC 51530 / DSM 4299 / JCM 9571 / NBRC 15438 / GSS1).